A 1013-amino-acid polypeptide reads, in one-letter code: MTSSEQWRAFLHQCLMRRIDAAEFKNLSKILFRRCPTAEGTLLDVLLEIRLATGIKWDPLLPLYIDCLCKMGKVQTSTVLTSLLKYSSIHDKPQSPSSETVQSKMALKCYTLMTDIRVIQDAMLSVSTGSTPKSLAEAVGIFSAIIDWIQAVVAWHNNHIDPSQQTGGLMSSPDAVSLFESLGILLTALSGTGKGIEVLSSDSHEALKVKLGQALSAYLPLCMEVSLPLRNRLDSLQKGFNLYGEPPNKSLQSMMDNVNVNALQFEASVMDGPVINSRAGLYIYINAMLVGRPLVDDSMLLNYLTNRYGGHYDVLVEEVITATFDVLSNALYRNESSRTMFLFRSFLVNKLPSFFAAMLAASMVSLPMEMCISHALSRLDPNTFPSFSQMFAMQGSTVLSEVRPEFLFACASHKLIPESSIERLLGENPMQTPPVGYNKDDLVSQINTNQERAEQLVSELESTEGNAGAIVAAITEVMHNLCNQKETMTLKSICNSLSRRPQALDVILLFRSAKQVLQPLCALLDSWHWDEDQGESQPVYDEFGSILLLVLTFKYRYDLRPYDLGITSNDSFVLKLLDCGSSSQNLDDLSEKQNRNLGAWITALFIAEGISEETMSSCSPQEFYLLVTTLFNQSLTACEAGKLEFDTLKGGFEYLLEPFLLPSLVVALTWLGNHIWETESDPTIPLKTLQSLVNPSSISGDAREIHKTVLNITARSLDEQLKDIRSRHPNRADIKPILDVLEPCLSFQRTGSCHRSELDSWTTHSPGGLLGSIRSTFQGLVLWSTSPGVSMAPHSYTHRQLVAGIRMLGSARVLTAIVDELKMQTETGNADLALDIAVTMICAPLAESFAIEQSNYHPVDPNKEPLPRCPVLTLRDALNLQHENVPKLSEKDPLRAEVIVRLYRRVNALMTPTSQMPNLDMSNIIQDMQLGVEDHGQMDLEPAGAGHGVGDDDAANLNRMLDNAAAAAAAGLDSGMGQGMGGGLDTSIDDVLNAADMAVGNPEFLDLDMEGMF.

Belongs to the Mediator complex subunit 5 family. In terms of assembly, component of the Mediator complex.

The protein localises to the nucleus. Component of the Mediator complex, a coactivator involved in the regulated transcription of nearly all RNA polymerase II-dependent genes. Mediator functions as a bridge to convey information from gene-specific regulatory proteins to the basal RNA polymerase II transcription machinery. Mediator is recruited to promoters by direct interactions with regulatory proteins and serves as a scaffold for the assembly of a functional preinitiation complex with RNA polymerase II and the general transcription factors. The protein is Mediator of RNA polymerase II transcription subunit 5 (NUT1) of Aspergillus oryzae (strain ATCC 42149 / RIB 40) (Yellow koji mold).